A 152-amino-acid chain; its full sequence is Transcriptional repressor NrdR (152 aa).

Residues 3-34 (CPYCNASETKVIDSRLAAEGAQVRRRRSCNSC) fold into a zinc finger. An ATP-cone domain is found at 49–139 (PRIIKSSGKI…VYRDFQDIDA (91 aa)).

It belongs to the NrdR family. It depends on Zn(2+) as a cofactor.

Negatively regulates transcription of bacterial ribonucleotide reductase nrd genes and operons by binding to NrdR-boxes. The protein is Transcriptional repressor NrdR of Psychrobacter cryohalolentis (strain ATCC BAA-1226 / DSM 17306 / VKM B-2378 / K5).